Reading from the N-terminus, the 604-residue chain is Glutamine--fructose-6-phosphate aminotransferase [isomerizing] (604 aa).

Cysteine 2 acts as the Nucleophile; for GATase activity in catalysis. The Glutamine amidotransferase type-2 domain maps to 2–219 (CGIMGAVSER…EGDSACVTTQ (218 aa)). SIS domains follow at residues 279-427 (LRAS…DNRA) and 454-594 (LASL…VDQP). Residue lysine 599 is the For Fru-6P isomerization activity of the active site.

In terms of assembly, homodimer.

The protein localises to the cytoplasm. The catalysed reaction is D-fructose 6-phosphate + L-glutamine = D-glucosamine 6-phosphate + L-glutamate. Catalyzes the first step in hexosamine metabolism, converting fructose-6P into glucosamine-6P using glutamine as a nitrogen source. The protein is Glutamine--fructose-6-phosphate aminotransferase [isomerizing] of Legionella pneumophila (strain Paris).